Here is a 237-residue protein sequence, read N- to C-terminus: tRNA (guanine-N(1)-)-methyltransferase (237 aa).

S-adenosyl-L-methionine is bound by residues Gly-115 and 134–139 (LGDFVL).

It belongs to the RNA methyltransferase TrmD family. Homodimer.

It is found in the cytoplasm. It carries out the reaction guanosine(37) in tRNA + S-adenosyl-L-methionine = N(1)-methylguanosine(37) in tRNA + S-adenosyl-L-homocysteine + H(+). Functionally, specifically methylates guanosine-37 in various tRNAs. The protein is tRNA (guanine-N(1)-)-methyltransferase of Synechococcus sp. (strain RCC307).